Consider the following 336-residue polypeptide: Holliday junction branch migration complex subunit RuvB (336 aa).

Residues 1-182 form a large ATPase domain (RuvB-L) region; sequence MKERIVNLET…FGMSFRMQFY (182 aa). Residues Leu21, Arg22, Gly63, Lys66, Thr67, Ser68, 129–131, Arg172, Tyr182, and Arg219 each bind ATP; that span reads EDF. Position 67 (Thr67) interacts with Mg(2+). Residues 183–253 form a small ATPAse domain (RuvB-S) region; it reads NPSELALIIK…ITLHALNELG (71 aa). The interval 256–336 is head domain (RuvB-H); sequence ELGFDEADLA…IPTLNPQTLF (81 aa). The DNA site is built by Arg310 and Arg315.

The protein belongs to the RuvB family. As to quaternary structure, homohexamer. Forms an RuvA(8)-RuvB(12)-Holliday junction (HJ) complex. HJ DNA is sandwiched between 2 RuvA tetramers; dsDNA enters through RuvA and exits via RuvB. An RuvB hexamer assembles on each DNA strand where it exits the tetramer. Each RuvB hexamer is contacted by two RuvA subunits (via domain III) on 2 adjacent RuvB subunits; this complex drives branch migration. In the full resolvosome a probable DNA-RuvA(4)-RuvB(12)-RuvC(2) complex forms which resolves the HJ.

It is found in the cytoplasm. It carries out the reaction ATP + H2O = ADP + phosphate + H(+). Its function is as follows. The RuvA-RuvB-RuvC complex processes Holliday junction (HJ) DNA during genetic recombination and DNA repair, while the RuvA-RuvB complex plays an important role in the rescue of blocked DNA replication forks via replication fork reversal (RFR). RuvA specifically binds to HJ cruciform DNA, conferring on it an open structure. The RuvB hexamer acts as an ATP-dependent pump, pulling dsDNA into and through the RuvAB complex. RuvB forms 2 homohexamers on either side of HJ DNA bound by 1 or 2 RuvA tetramers; 4 subunits per hexamer contact DNA at a time. Coordinated motions by a converter formed by DNA-disengaged RuvB subunits stimulates ATP hydrolysis and nucleotide exchange. Immobilization of the converter enables RuvB to convert the ATP-contained energy into a lever motion, pulling 2 nucleotides of DNA out of the RuvA tetramer per ATP hydrolyzed, thus driving DNA branch migration. The RuvB motors rotate together with the DNA substrate, which together with the progressing nucleotide cycle form the mechanistic basis for DNA recombination by continuous HJ branch migration. Branch migration allows RuvC to scan DNA until it finds its consensus sequence, where it cleaves and resolves cruciform DNA. The protein is Holliday junction branch migration complex subunit RuvB of Helicobacter pylori (strain ATCC 700392 / 26695) (Campylobacter pylori).